We begin with the raw amino-acid sequence, 225 residues long: Chromosome partition protein MukE (225 aa).

The disordered stretch occupies residues 197–225 (RDGEAMPIENHLQLNDETEENQPDSGEEE). The span at 212–225 (DETEENQPDSGEEE) shows a compositional bias: acidic residues.

It belongs to the MukE family. In terms of assembly, interacts, and probably forms a ternary complex, with MukF and MukB. The complex formation is stimulated by calcium or magnesium.

The protein localises to the cytoplasm. Its subcellular location is the nucleoid. In terms of biological role, involved in chromosome condensation, segregation and cell cycle progression. May participate in facilitating chromosome segregation by condensation DNA from both sides of a centrally located replisome during cell division. Probably acts via its interaction with MukB and MukF. In Escherichia coli O157:H7, this protein is Chromosome partition protein MukE.